The primary structure comprises 124 residues: Thioredoxin domain-containing protein C21C3.12c (124 aa).

Residues 37-124 (PWCPTVRAAL…ANKFSKFIDI (88 aa)) form the Thioredoxin domain. Cys-39 acts as the Nucleophile in catalysis.

This sequence belongs to the thioredoxin family.

It localises to the cytoplasm. The protein resides in the nucleus. This chain is Thioredoxin domain-containing protein C21C3.12c, found in Schizosaccharomyces pombe (strain 972 / ATCC 24843) (Fission yeast).